The following is a 156-amino-acid chain: Cyanate hydratase (156 aa).

Catalysis depends on residues arginine 96, glutamate 99, and serine 122.

The protein belongs to the cyanase family.

It carries out the reaction cyanate + hydrogencarbonate + 3 H(+) = NH4(+) + 2 CO2. Catalyzes the reaction of cyanate with bicarbonate to produce ammonia and carbon dioxide. The sequence is that of Cyanate hydratase from Burkholderia pseudomallei (strain 1106a).